The chain runs to 380 residues: Large ribosomal subunit protein mL38 (380 aa).

A mitochondrion-targeting transit peptide spans 1–26; the sequence is MAAPWWRVVLNGSRNWRGFSTSAALS. The stretch at 101-122 forms a coiled coil; that stretch reads QQLLERKRVLRELRTSVEEERA.

The protein belongs to the phosphatidylethanolamine-binding protein family. Mitochondrion-specific ribosomal protein mL38 subfamily. Component of the mitochondrial ribosome large subunit (39S) which comprises a 16S rRNA and about 50 distinct proteins.

It localises to the mitochondrion. The protein is Large ribosomal subunit protein mL38 (MRPL38) of Bos taurus (Bovine).